The chain runs to 160 residues: Phosphopantetheine adenylyltransferase (160 aa).

S10 is a binding site for substrate. ATP contacts are provided by residues 10–11 (SF) and H18. Substrate is bound by residues K42, T74, and R88. ATP contacts are provided by residues 89–91 (GLR), E99, and 124–130 (YSFISST).

Belongs to the bacterial CoaD family. As to quaternary structure, homohexamer. Requires Mg(2+) as cofactor.

Its subcellular location is the cytoplasm. It carries out the reaction (R)-4'-phosphopantetheine + ATP + H(+) = 3'-dephospho-CoA + diphosphate. It participates in cofactor biosynthesis; coenzyme A biosynthesis; CoA from (R)-pantothenate: step 4/5. In terms of biological role, reversibly transfers an adenylyl group from ATP to 4'-phosphopantetheine, yielding dephospho-CoA (dPCoA) and pyrophosphate. This Leptospira borgpetersenii serovar Hardjo-bovis (strain L550) protein is Phosphopantetheine adenylyltransferase.